A 507-amino-acid polypeptide reads, in one-letter code: 2,3-bisphosphoglycerate-independent phosphoglycerate mutase (507 aa).

Residues Asp-11 and Ser-61 each coordinate Mn(2+). Catalysis depends on Ser-61, which acts as the Phosphoserine intermediate. Residues His-122, 150 to 151 (RD), Arg-182, Arg-188, 257 to 260 (RPDR), and Lys-332 contribute to the substrate site. Residues Asp-397, His-401, Asp-438, His-439, and His-456 each contribute to the Mn(2+) site.

The protein belongs to the BPG-independent phosphoglycerate mutase family. As to quaternary structure, monomer. Mn(2+) serves as cofactor.

The enzyme catalyses (2R)-2-phosphoglycerate = (2R)-3-phosphoglycerate. It participates in carbohydrate degradation; glycolysis; pyruvate from D-glyceraldehyde 3-phosphate: step 3/5. Its function is as follows. Catalyzes the interconversion of 2-phosphoglycerate and 3-phosphoglycerate. The chain is 2,3-bisphosphoglycerate-independent phosphoglycerate mutase from Mycoplasma genitalium (strain ATCC 33530 / DSM 19775 / NCTC 10195 / G37) (Mycoplasmoides genitalium).